The sequence spans 207 residues: Guanylate kinase (207 aa).

Residues 6-185 (GLLIVLSGPS…AKNRIQCIVE (180 aa)) form the Guanylate kinase-like domain. 13–20 (GPSGVGKG) contributes to the ATP binding site.

The protein belongs to the guanylate kinase family.

Its subcellular location is the cytoplasm. It carries out the reaction GMP + ATP = GDP + ADP. In terms of biological role, essential for recycling GMP and indirectly, cGMP. The polypeptide is Guanylate kinase (Staphylococcus aureus (strain USA300)).